The chain runs to 833 residues: MTFYDHTAIEPKWQAFWADNHTFKTGTDASKPKFYALDMFPYPSGAGLHVGHPEGYTATDILSRFKRAQGHNVLHPMGWDAFGLPAEQYAMDTGNDPAEFTAENIANFKRQINALGFSYDWDREVNTTDPNYYKWTQWIFTKLYEKGLAYEAEVPVNWVEELGTAIANEEVLPDGTSERGGYPVVRKPMRQWMLKITAYAERLLEDLEEVDWPESIKDMQRNWIGKSTGANVTFKVKDTDKDFTVFTTRPDTLFGATYAVLAPEHALVDAITTADQAEAVADYKRQASLKSDLARTDLAKEKTGVWTGSYAINPVNGNEMPVWIADYVLASYGTGAIMAVPAHDERDWEFAKQFNLDIIPVLEGGNVEEAAFTEDGLHINSGFLDGLDKASAIAKMVEWLEAEGVGNEKVTYRLRDWLFSRQRYWGEPIPIIHWEDGTSTAVPESELPLVLPVTKDIRPSGTGESPLANVTDWLEVTREDGVKGRRETNTMPQWAGSSWYYLRYIDPHNTEKLADEELLKQWLPVDIYVGGAEHAVLHLLYARFWHKVLYDLGVVPTKEPFQKLFNQGMILGTSYRDSRGALVATDKVEKRDGSFFHLETGEELEQAPAKMSKSLKNVVNPDDVVEQYGADTLRVYEMFMGPLDASIAWSEEGLEGSRKFLDRVYRLVTTKEIVAENSGALDKVYNETVKAVTEQVDQMKFNTAIAQLMVFVNAANKEDKLFSDYAKGFVQLIAPFAPHLGEELWQALTASGESISYVPWPSYDESKLVENDVEIVVQIKGKVKAKLVVAKDLSREELQEVALANEKVQAEIAGKDIIKVIAVPNKLVNIVIK.

A 'HIGH' region motif is present at residues 41-52 (PYPSGAGLHVGH). Residues 610–614 (KMSKS) carry the 'KMSKS' region motif. An ATP-binding site is contributed by Lys-613.

It belongs to the class-I aminoacyl-tRNA synthetase family.

It localises to the cytoplasm. The catalysed reaction is tRNA(Leu) + L-leucine + ATP = L-leucyl-tRNA(Leu) + AMP + diphosphate. The sequence is that of Leucine--tRNA ligase from Streptococcus pyogenes serotype M18 (strain MGAS8232).